We begin with the raw amino-acid sequence, 77 residues long: Omega-conotoxin-like SO-5 (77 aa).

The signal sequence occupies residues 1–22; sequence MKLTCVMIVAVLLLTACQLITA. Residues 23–42 constitute a propeptide that is removed on maturation; that stretch reads DDSRGTQKHRSLRSTTKVSK. 3 disulfides stabilise this stretch: cysteine 46/cysteine 61, cysteine 53/cysteine 64, and cysteine 60/cysteine 71.

The protein belongs to the conotoxin O1 superfamily. As to expression, expressed by the venom duct.

Its subcellular location is the secreted. Omega-conotoxins act at presynaptic membranes, they bind and block voltage-gated calcium channels (Cav). The sequence is that of Omega-conotoxin-like SO-5 (SO5) from Conus striatus (Striated cone).